Reading from the N-terminus, the 190-residue chain is UPF0200 protein MTH_434 (190 aa).

An ATP-binding site is contributed by 10 to 17; it reads GMPGAGKG.

It belongs to the UPF0200 family.

This is UPF0200 protein MTH_434 from Methanothermobacter thermautotrophicus (strain ATCC 29096 / DSM 1053 / JCM 10044 / NBRC 100330 / Delta H) (Methanobacterium thermoautotrophicum).